The primary structure comprises 381 residues: Alkanesulfonate monooxygenase (381 aa).

It belongs to the SsuD family. As to quaternary structure, homotetramer.

The enzyme catalyses an alkanesulfonate + FMNH2 + O2 = an aldehyde + FMN + sulfite + H2O + 2 H(+). Catalyzes the desulfonation of aliphatic sulfonates. In Escherichia coli O81 (strain ED1a), this protein is Alkanesulfonate monooxygenase.